Here is a 616-residue protein sequence, read N- to C-terminus: Chaperone protein HscA homolog (616 aa).

The protein belongs to the heat shock protein 70 family.

Probable chaperone. Has a low intrinsic ATPase activity which is markedly stimulated by HscB. The protein is Chaperone protein HscA homolog of Vibrio cholerae serotype O1 (strain ATCC 39315 / El Tor Inaba N16961).